The following is a 272-amino-acid chain: 1,4-dihydroxy-2-naphthoyl-CoA synthase (272 aa).

Substrate is bound by residues R33, 72–76 (SGGDQ), Y84, 116–120 (YAIGG), T142, S148, Y245, and K260. Position 141 to 143 (141 to 143 (QTG)) interacts with hydrogencarbonate.

It belongs to the enoyl-CoA hydratase/isomerase family. MenB subfamily. It depends on hydrogencarbonate as a cofactor.

It catalyses the reaction 2-succinylbenzoyl-CoA + H(+) = 1,4-dihydroxy-2-naphthoyl-CoA + H2O. The protein operates within quinol/quinone metabolism; 1,4-dihydroxy-2-naphthoate biosynthesis; 1,4-dihydroxy-2-naphthoate from chorismate: step 6/7. Its pathway is quinol/quinone metabolism; menaquinone biosynthesis. Functionally, converts o-succinylbenzoyl-CoA (OSB-CoA) to 1,4-dihydroxy-2-naphthoyl-CoA (DHNA-CoA). The sequence is that of 1,4-dihydroxy-2-naphthoyl-CoA synthase from Staphylococcus epidermidis (strain ATCC 35984 / DSM 28319 / BCRC 17069 / CCUG 31568 / BM 3577 / RP62A).